Reading from the N-terminus, the 385-residue chain is Succinyl-diaminopimelate desuccinylase (385 aa).

His78 provides a ligand contact to Zn(2+). Asp80 is a catalytic residue. Asp110 provides a ligand contact to Zn(2+). The Proton acceptor role is filled by Glu144. Positions 145, 173, and 358 each coordinate Zn(2+).

This sequence belongs to the peptidase M20A family. DapE subfamily. As to quaternary structure, homodimer. Zn(2+) serves as cofactor. The cofactor is Co(2+).

It carries out the reaction N-succinyl-(2S,6S)-2,6-diaminopimelate + H2O = (2S,6S)-2,6-diaminopimelate + succinate. It participates in amino-acid biosynthesis; L-lysine biosynthesis via DAP pathway; LL-2,6-diaminopimelate from (S)-tetrahydrodipicolinate (succinylase route): step 3/3. Functionally, catalyzes the hydrolysis of N-succinyl-L,L-diaminopimelic acid (SDAP), forming succinate and LL-2,6-diaminopimelate (DAP), an intermediate involved in the bacterial biosynthesis of lysine and meso-diaminopimelic acid, an essential component of bacterial cell walls. The sequence is that of Succinyl-diaminopimelate desuccinylase from Gluconacetobacter diazotrophicus (strain ATCC 49037 / DSM 5601 / CCUG 37298 / CIP 103539 / LMG 7603 / PAl5).